The sequence spans 306 residues: Proteasome subunit beta (306 aa).

Residues 1 to 67 (MTWPNRDQPA…GLPTDAVPHG (67 aa)) constitute a propeptide, removed in mature form; by autocatalysis. Threonine 68 acts as the Nucleophile in catalysis.

Belongs to the peptidase T1B family. As to quaternary structure, the 20S proteasome core is composed of 14 alpha and 14 beta subunits that assemble into four stacked heptameric rings, resulting in a barrel-shaped structure. The two inner rings, each composed of seven catalytic beta subunits, are sandwiched by two outer rings, each composed of seven alpha subunits. The catalytic chamber with the active sites is on the inside of the barrel. Has a gated structure, the ends of the cylinder being occluded by the N-termini of the alpha-subunits. Is capped by the proteasome-associated ATPase, ARC.

The protein localises to the cytoplasm. The enzyme catalyses Cleavage of peptide bonds with very broad specificity.. The protein operates within protein degradation; proteasomal Pup-dependent pathway. With respect to regulation, the formation of the proteasomal ATPase ARC-20S proteasome complex, likely via the docking of the C-termini of ARC into the intersubunit pockets in the alpha-rings, may trigger opening of the gate for substrate entry. Interconversion between the open-gate and close-gate conformations leads to a dynamic regulation of the 20S proteasome proteolysis activity. In terms of biological role, component of the proteasome core, a large protease complex with broad specificity involved in protein degradation. The polypeptide is Proteasome subunit beta (Mycolicibacterium vanbaalenii (strain DSM 7251 / JCM 13017 / BCRC 16820 / KCTC 9966 / NRRL B-24157 / PYR-1) (Mycobacterium vanbaalenii)).